The primary structure comprises 673 residues: FLYWCH-type zinc finger-containing protein 1 (673 aa).

Residues 1-62 form a disordered region; the sequence is MPLPEPSEQD…SSTATLPNNT (62 aa). S21 carries the post-translational modification Phosphoserine. Residues 47-62 are compositionally biased toward polar residues; it reads VASQETSSTATLPNNT. 2 consecutive FLYWCH-type zinc fingers follow at residues 92–150 and 235–293; these read FLKT…DHCH and FLKT…SHCH. Residue K110 forms a Glycyl lysine isopeptide (Lys-Gly) (interchain with G-Cter in SUMO2) linkage. Residues 147 to 158 show a composition bias toward basic and acidic residues; sequence DHCHPPEKEGLD. Positions 147–178 are disordered; sequence DHCHPPEKEGLDRKKRHRGRPPSSALPEGAEV. Residues S294 and S339 each carry the phosphoserine modification. The segment at 351–402 is disordered; it reads LSRSKSKSKSKSRSKSKSKSRSRSRKRAKKQQESSQEPPEEDQDVDPRGPEF. The segment covering 354–379 has biased composition (basic residues); it reads SKSKSKSKSRSKSKSKSRSRSRKRAK. 3 FLYWCH-type zinc fingers span residues 402 to 460, 490 to 548, and 581 to 639; these read FLKT…SHCH, FLKT…RHCH, and FLRT…SHCH. Residues 646-673 form a disordered region; the sequence is LEALRQREKAPSAAKKKKKKKKKKKGIH. The span at 659–673 shows a compositional bias: basic residues; it reads AKKKKKKKKKKKGIH. K666 participates in a covalent cross-link: Glycyl lysine isopeptide (Lys-Gly) (interchain with G-Cter in SUMO2).

Interacts with CTNNB1 (when unphosphorylated), perhaps preventing interaction of CTNNB1 with TCF4, and thereby regulating transcription activation; phosphorylation of CTNNB1 may inhibit the interaction.

The protein localises to the nucleus. The protein resides in the chromosome. Its subcellular location is the centromere. In terms of biological role, transcription cofactor. Negatively regulates transcription activation by catenin beta-1 CTNNB1, perhaps acting by competing with TCF4 for CTNNB1 binding. May play a role in DNA-damage response signaling. Binds specifically to DNA sequences at peri-centromeric chromatin loci. This Mus musculus (Mouse) protein is FLYWCH-type zinc finger-containing protein 1 (Flywch1).